The primary structure comprises 172 residues: Trypsin inhibitor DE-3 (172 aa).

Disulfide bonds link Cys-39–Cys-83 and Cys-132–Cys-139.

This sequence belongs to the protease inhibitor I3 (leguminous Kunitz-type inhibitor) family.

In terms of biological role, inhibition of trypsin. The protein is Trypsin inhibitor DE-3 of Erythrina latissima (Broad-leaved coral tree).